Consider the following 216-residue polypeptide: Orotate phosphoribosyltransferase (216 aa).

Position 30 (lysine 30) interacts with 5-phospho-alpha-D-ribose 1-diphosphate. 38-39 (FF) lines the orotate pocket. Residues 75–76 (YK), arginine 102, lysine 103, lysine 106, histidine 108, and 128–136 (DDVITAGTA) contribute to the 5-phospho-alpha-D-ribose 1-diphosphate site. The orotate site is built by threonine 132 and arginine 160.

It belongs to the purine/pyrimidine phosphoribosyltransferase family. PyrE subfamily. As to quaternary structure, homodimer. It depends on Mg(2+) as a cofactor.

It carries out the reaction orotidine 5'-phosphate + diphosphate = orotate + 5-phospho-alpha-D-ribose 1-diphosphate. The protein operates within pyrimidine metabolism; UMP biosynthesis via de novo pathway; UMP from orotate: step 1/2. Functionally, catalyzes the transfer of a ribosyl phosphate group from 5-phosphoribose 1-diphosphate to orotate, leading to the formation of orotidine monophosphate (OMP). This chain is Orotate phosphoribosyltransferase, found in Acinetobacter baumannii (strain ACICU).